Here is a 308-residue protein sequence, read N- to C-terminus: Taste receptor type 2 member 10 (308 aa).

Topologically, residues 1–6 are extracellular; the sequence is MLSVVE. Residues 7–27 traverse the membrane as a helical segment; it reads GIFIFVVISESVFGVLGNGFI. The Cytoplasmic segment spans residues 28 to 42; it reads GLVNCIDCAKNKLST. The helical transmembrane segment at 43–63 threads the bilayer; that stretch reads IGFILTGLAISRIFLIWVIIT. Topologically, residues 64-100 are extracellular; sequence DGFIQIFSPDIYASGNLIEYISYIWVIGNQSSMWFAT. Asn-92 is a glycosylation site (N-linked (GlcNAc...) asparagine). The chain crosses the membrane as a helical span at residues 101-121; it reads SLSIFYFLKIANFSNYIFLWL. Residues 122–126 are Cytoplasmic-facing; the sequence is KSRTN. A helical membrane pass occupies residues 127–147; sequence MVLPFMMAFLLISSLLNFAHI. The Extracellular segment spans residues 148–179; the sequence is VKILNDHKMKNDTVWHLNMYKSEYFIKQILLN. A glycan (N-linked (GlcNAc...) asparagine) is linked at Asn-158. The helical transmembrane segment at 180 to 200 threads the bilayer; sequence LGVIFFFTLSLITCVLLIISL. Topologically, residues 201 to 227 are cytoplasmic; sequence WRHNRQMQSNVTGLRDSNTEAHVKAMK. Residues 228-248 traverse the membrane as a helical segment; that stretch reads VLISFIILFILYFIGMALEIS. Residues 249-257 are Extracellular-facing; that stretch reads RFTVPENKL. Residues 258-278 form a helical membrane-spanning segment; that stretch reads LLMFGMTTTAIYPWGHSFILI. The Cytoplasmic segment spans residues 279–308; that stretch reads LGNSKLKQASLRVLQQLKCCEKRKKSQSHI.

The protein belongs to the G-protein coupled receptor T2R family.

It localises to the membrane. Its function is as follows. Receptor that may play a role in the perception of bitterness and is gustducin-linked. May play a role in sensing the chemical composition of the gastrointestinal content. The activity of this receptor may stimulate alpha gustducin, mediate PLC-beta-2 activation and lead to the gating of TRPM5. This Pongo pygmaeus (Bornean orangutan) protein is Taste receptor type 2 member 10 (TAS2R10).